Here is a 443-residue protein sequence, read N- to C-terminus: Thymidine phosphorylase (443 aa).

It belongs to the thymidine/pyrimidine-nucleoside phosphorylase family. Homodimer.

The catalysed reaction is thymidine + phosphate = 2-deoxy-alpha-D-ribose 1-phosphate + thymine. The protein operates within pyrimidine metabolism; dTMP biosynthesis via salvage pathway; dTMP from thymine: step 1/2. The enzymes which catalyze the reversible phosphorolysis of pyrimidine nucleosides are involved in the degradation of these compounds and in their utilization as carbon and energy sources, or in the rescue of pyrimidine bases for nucleotide synthesis. The protein is Thymidine phosphorylase of Shewanella putrefaciens (strain CN-32 / ATCC BAA-453).